We begin with the raw amino-acid sequence, 327 residues long: Cytochrome P450 2C42 (327 aa).

Cys-272 provides a ligand contact to heme.

It belongs to the cytochrome P450 family. It depends on heme as a cofactor.

The protein resides in the endoplasmic reticulum membrane. Its subcellular location is the microsome membrane. The enzyme catalyses an organic molecule + reduced [NADPH--hemoprotein reductase] + O2 = an alcohol + oxidized [NADPH--hemoprotein reductase] + H2O + H(+). Cytochromes P450 are a group of heme-thiolate monooxygenases. In liver microsomes, this enzyme is involved in an NADPH-dependent electron transport pathway. It oxidizes a variety of structurally unrelated compounds, including steroids, fatty acids, and xenobiotics. The sequence is that of Cytochrome P450 2C42 (CYP2C42) from Sus scrofa (Pig).